Consider the following 249-residue polypeptide: Tabinhibitin 4 (249 aa).

The N-terminal stretch at 1–23 (MTLNVYFVLLSPYSLQSVPLPLT) is a signal peptide. The short motif at 31-33 (RGD) is the Cell attachment site element. The SCP domain maps to 64–207 (LQKTNWLRGV…LKRALFTCNF (144 aa)). Positions 220–222 (RGD) match the Cell attachment site motif.

This sequence belongs to the CRISP family. As to expression, expressed in salivary glands.

Its subcellular location is the secreted. Its function is as follows. Inhibits platelet aggregation induced by all agonists tested (ADP, arachidonic acid, the thromboxane A2 analog U46619, thrombin, and snake venom snaclecs (TMVA that activates platelet through GPIB, and stejnulxin that specifically acts through GPVI (GP6))). May act by competing with fibrinogen for binding to glycoprotein IIb/IIIa (ITGA2B/ITGB3). This chain is Tabinhibitin 4, found in Tabanus yao (Horsefly).